Here is a 327-residue protein sequence, read N- to C-terminus: Phenylalanine--tRNA ligase alpha subunit (327 aa).

Residue E252 participates in Mg(2+) binding.

The protein belongs to the class-II aminoacyl-tRNA synthetase family. Phe-tRNA synthetase alpha subunit type 1 subfamily. As to quaternary structure, tetramer of two alpha and two beta subunits. The cofactor is Mg(2+).

Its subcellular location is the cytoplasm. It catalyses the reaction tRNA(Phe) + L-phenylalanine + ATP = L-phenylalanyl-tRNA(Phe) + AMP + diphosphate + H(+). The sequence is that of Phenylalanine--tRNA ligase alpha subunit from Haemophilus ducreyi (strain 35000HP / ATCC 700724).